Here is a 44-residue protein sequence, read N- to C-terminus: Unknown protein 1 (44 aa).

The sequence is that of Unknown protein 1 from Lonomia obliqua (Moth).